Consider the following 246-residue polypeptide: Probable transcriptional regulatory protein APJL_1171 (246 aa).

The protein belongs to the TACO1 family.

Its subcellular location is the cytoplasm. The polypeptide is Probable transcriptional regulatory protein APJL_1171 (Actinobacillus pleuropneumoniae serotype 3 (strain JL03)).